Reading from the N-terminus, the 492-residue chain is Membrane-bound glycerophospholipid O-acyltransferase 1 (492 aa).

6 helical membrane-spanning segments follow: residues 33-53 (VNFVACQLFALSAAFWFRIYL), 69-89 (ILGIYFVVFCFGWYAVHLFVL), 125-145 (IYIFHYGILTTDFSGPLMIVT), 179-199 (PSLLEYLSYHLNFMSVIAGPC), 237-257 (MGAVIQKLCVTLMSLLLFLTL), and 296-316 (YFAWTLADAVHNAAGFGFNGM). Active-site residues include N349 and H380. A run of 3 helical transmembrane segments spans residues 370 to 390 (VLTFLLSALWHGVYPGYYFTF), 423 to 443 (VVTWAVTQLAVSYTAAPFVML), and 452 to 472 (YKSVFFFLHIICLLIILFLPI). The residue at position 486 (S486) is a Phosphoserine.

The protein belongs to the membrane-bound acyltransferase family. Highly expressed in stomach, epididymis, and colon.

The protein resides in the endoplasmic reticulum membrane. It carries out the reaction a 1-acyl-sn-glycero-3-phosphoethanolamine + an acyl-CoA = a 1,2-diacyl-sn-glycero-3-phosphoethanolamine + CoA. The catalysed reaction is a 1-acyl-sn-glycero-3-phospho-L-serine + an acyl-CoA = a 1,2-diacyl-sn-glycero-3-phospho-L-serine + CoA. It catalyses the reaction a 1-acyl-sn-glycero-3-phosphocholine + an acyl-CoA = a 1,2-diacyl-sn-glycero-3-phosphocholine + CoA. The enzyme catalyses a 1-O-(1Z-alkenyl)-sn-glycero-3-phosphoethanolamine + (9Z)-octadecenoyl-CoA = 1-O-(1Z)-alkenyl-2-(9Z)-octadecenoyl-sn-glycero-3-phosphoethanolamine + CoA. It carries out the reaction 1-octadecanoyl-sn-glycero-3-phosphoethanolamine + (9Z)-octadecenoyl-CoA = 1-octadecanoyl-2-(9Z-octadecenoyl)-sn-glycero-3-phosphoethanolamine + CoA. The catalysed reaction is 1-(9Z-octadecenoyl)-sn-glycero-3-phospho-L-serine + (9Z)-octadecenoyl-CoA = 1,2-di-(9Z)-octadecenoyl-sn-glycero-3-phospho-L-serine + CoA. It catalyses the reaction 1-(9Z-octadecenoyl)-sn-glycero-3-phosphoethanolamine + (9Z)-octadecenoyl-CoA = 1,2-di-(9Z-octadecenoyl)-sn-glycero-3-phosphoethanolamine + CoA. The enzyme catalyses 1-hexadecanoyl-sn-glycero-3-phosphoethanolamine + (9Z)-octadecenoyl-CoA = 1-hexadecanoyl-2-(9Z-octadecenoyl)-sn-glycero-3-phosphoethanolamine + CoA. It carries out the reaction 1-(10Z-heptadecenoyl)-sn-glycero-3-phosphoethanolamine + hexadecanoyl-CoA = 1-(10Z-heptadecenoyl)-2-hexadecanoyl-sn-glycero-3-phosphoethanolamine + CoA. The catalysed reaction is 1-(9Z-octadecenoyl)-sn-glycero-3-phospho-L-serine + octadecanoyl-CoA = 1-(9Z-octadecenoyl)-2-octadecanoyl-sn-glycero-3-phospho-L-serine + CoA. It catalyses the reaction 1-(9Z-octadecenoyl)-sn-glycero-3-phospho-L-serine + (9Z)-hexadecenoyl-CoA = 1-(9Z-octadecenoyl)-2-(9Z-hexadecenoyl)-sn-glycero-3-phospho-L-serine + CoA. The enzyme catalyses 1-(9Z-octadecenoyl)-sn-glycero-3-phospho-L-serine + (9Z,12Z)-octadecadienoyl-CoA = 1-(9Z-octadecenoyl)-2-(9Z,12Z-octadienoyl)-sn-glycero-3-phospho-L-serine + CoA. It carries out the reaction 1-hexadecanoyl-sn-glycero-3-phosphocholine + (9Z)-octadecenoyl-CoA = 1-hexadecanoyl-2-(9Z-octadecenoyl)-sn-glycero-3-phosphocholine + CoA. The catalysed reaction is 1-(10Z-heptadecenoyl)-sn-glycero-3-phosphoethanolamine + (9Z)-octadecenoyl-CoA = 1-(10Z-heptadecenoyl)-2-(9Z-octadecenoyl)-sn-glycero-3-phosphoethanolamine + CoA. It functions in the pathway lipid metabolism; phospholipid metabolism. Its function is as follows. Acyltransferase which catalyzes the transfer of an acyl group from an acyl-CoA towards a lysophospholipid producing a phospholipid and participates in the reacylation step of the phospholipid remodeling pathway also known as the Lands cycle. Acts on lysophosphatidylserine (1-acyl-2-hydroxy-sn-glycero-3-phospho-L-serine or LPS) and lysophosphatidylethanolamine (1-acyl-sn-glycero-3-phosphoethanolamine or LPE), and to a lesser extend lysophosphatidylcholine. Prefers oleoyl-CoA as the acyl donor and 1-oleoyl-LPE as acceptor. May play a role in neurite outgrowth during neuronal differentiation. This chain is Membrane-bound glycerophospholipid O-acyltransferase 1, found in Mus musculus (Mouse).